Here is a 499-residue protein sequence, read N- to C-terminus: Lysine--tRNA ligase (499 aa).

The Mg(2+) site is built by glutamate 408 and glutamate 415.

It belongs to the class-II aminoacyl-tRNA synthetase family. In terms of assembly, homodimer. Mg(2+) is required as a cofactor.

The protein localises to the cytoplasm. It catalyses the reaction tRNA(Lys) + L-lysine + ATP = L-lysyl-tRNA(Lys) + AMP + diphosphate. This Bacillus thuringiensis (strain Al Hakam) protein is Lysine--tRNA ligase.